We begin with the raw amino-acid sequence, 124 residues long: Ribonuclease pancreatic (124 aa).

A compositionally biased stretch (basic and acidic residues) spans 1-13 (SETAAEKFERQHM). The segment at 1–23 (SETAAEKFERQHMDSYSSSSSNS) is disordered. Positions 7 and 10 each coordinate substrate. Histidine 12 acts as the Proton acceptor in catalysis. 4 disulfide bridges follow: cysteine 26-cysteine 84, cysteine 40-cysteine 95, cysteine 58-cysteine 110, and cysteine 65-cysteine 72. Residues 41 to 45 (KPVNT), lysine 66, and arginine 85 each bind substrate. Catalysis depends on histidine 119, which acts as the Proton donor.

The protein belongs to the pancreatic ribonuclease family. Monomer. Interacts with and forms tight 1:1 complexes with RNH1. Dimerization of two such complexes may occur. Interaction with RNH1 inhibits this protein. In terms of tissue distribution, pancreas.

It is found in the secreted. The catalysed reaction is an [RNA] containing cytidine + H2O = an [RNA]-3'-cytidine-3'-phosphate + a 5'-hydroxy-ribonucleotide-3'-[RNA].. The enzyme catalyses an [RNA] containing uridine + H2O = an [RNA]-3'-uridine-3'-phosphate + a 5'-hydroxy-ribonucleotide-3'-[RNA].. Functionally, endonuclease that catalyzes the cleavage of RNA on the 3' side of pyrimidine nucleotides. Acts on single-stranded and double-stranded RNA. The chain is Ribonuclease pancreatic (RNASE1) from Camelus dromedarius (Dromedary).